A 227-amino-acid polypeptide reads, in one-letter code: Peroxisomal membrane protein 11B (227 aa).

At 1 to 85 the chain is on the cytoplasmic side; it reads MSLDTVDKLV…RNPGATPMIR (85 aa). Residues 86–106 form a helical membrane-spanning segment; the sequence is FLAVLANSGEMVYFFFDHFLW. Over 107-201 the chain is Lumenal; sequence LSRIGSIDAK…IALAEIHPNP (95 aa). A helical membrane pass occupies residues 202-222; it reads FCNHTITLGISGLVSAWAGWY. Topologically, residues 223–227 are cytoplasmic; sequence RNWPS.

Belongs to the peroxin-11 family. Homooligomer. Interacts with ARC5 and FIS1B on peroxisomes. As to expression, expressed in roots, leaves and developing siliques.

It localises to the peroxisome membrane. Involved in peroxisomal proliferation. Promotes peroxisomal duplication, aggregation or elongation without fission. The chain is Peroxisomal membrane protein 11B (PEX11B) from Arabidopsis thaliana (Mouse-ear cress).